Here is a 155-residue protein sequence, read N- to C-terminus: Deoxyuridine 5'-triphosphate nucleotidohydrolase (155 aa).

Residues 74 to 76 (RSG), asparagine 87, and 91 to 93 (LID) contribute to the substrate site.

Belongs to the dUTPase family. Mg(2+) is required as a cofactor.

It catalyses the reaction dUTP + H2O = dUMP + diphosphate + H(+). The protein operates within pyrimidine metabolism; dUMP biosynthesis; dUMP from dCTP (dUTP route): step 2/2. Its function is as follows. This enzyme is involved in nucleotide metabolism: it produces dUMP, the immediate precursor of thymidine nucleotides and it decreases the intracellular concentration of dUTP so that uracil cannot be incorporated into DNA. The protein is Deoxyuridine 5'-triphosphate nucleotidohydrolase of Xanthomonas oryzae pv. oryzae (strain MAFF 311018).